The primary structure comprises 428 residues: Gamma-glutamyl phosphate reductase (428 aa).

Belongs to the gamma-glutamyl phosphate reductase family.

It localises to the cytoplasm. The catalysed reaction is L-glutamate 5-semialdehyde + phosphate + NADP(+) = L-glutamyl 5-phosphate + NADPH + H(+). It functions in the pathway amino-acid biosynthesis; L-proline biosynthesis; L-glutamate 5-semialdehyde from L-glutamate: step 2/2. Functionally, catalyzes the NADPH-dependent reduction of L-glutamate 5-phosphate into L-glutamate 5-semialdehyde and phosphate. The product spontaneously undergoes cyclization to form 1-pyrroline-5-carboxylate. This is Gamma-glutamyl phosphate reductase from Afipia carboxidovorans (strain ATCC 49405 / DSM 1227 / KCTC 32145 / OM5) (Oligotropha carboxidovorans).